A 280-amino-acid polypeptide reads, in one-letter code: 2-dehydro-3-deoxyphosphooctonate aldolase (280 aa).

This sequence belongs to the KdsA family.

The protein localises to the cytoplasm. It carries out the reaction D-arabinose 5-phosphate + phosphoenolpyruvate + H2O = 3-deoxy-alpha-D-manno-2-octulosonate-8-phosphate + phosphate. Its pathway is carbohydrate biosynthesis; 3-deoxy-D-manno-octulosonate biosynthesis; 3-deoxy-D-manno-octulosonate from D-ribulose 5-phosphate: step 2/3. It functions in the pathway bacterial outer membrane biogenesis; lipopolysaccharide biosynthesis. The chain is 2-dehydro-3-deoxyphosphooctonate aldolase from Nitrosococcus oceani (strain ATCC 19707 / BCRC 17464 / JCM 30415 / NCIMB 11848 / C-107).